Consider the following 264-residue polypeptide: Proteasome assembly chaperone 2 (264 aa).

Phosphothreonine is present on Thr137.

Belongs to the PSMG2 family. Forms a heterodimer with PSMG1. The PSMG1-PSMG2 heterodimer interacts directly with the PSMA5 and PSMA7 proteasome alpha subunits. Degraded by the proteasome upon completion of 20S proteasome maturation. Widely expressed with highest levels in lung, brain and colon. Moderately expressed in muscle, stomach, spleen and heart. Weakly expressed in small intestine, pancreas and liver. Highly expressed in hepatocellular carcinomas with low levels in surrounding liver tissue.

It localises to the nucleus. Functionally, chaperone protein which promotes assembly of the 20S proteasome as part of a heterodimer with PSMG1. The PSMG1-PSMG2 heterodimer binds to the PSMA5 and PSMA7 proteasome subunits, promotes assembly of the proteasome alpha subunits into the heteroheptameric alpha ring and prevents alpha ring dimerization. This chain is Proteasome assembly chaperone 2, found in Homo sapiens (Human).